The chain runs to 198 residues: Carnitine operon protein CaiE (198 aa).

Residues Lys174–Gln198 form a disordered region. The segment covering Glu180–Gln198 has biased composition (basic and acidic residues).

It belongs to the transferase hexapeptide repeat family.

Its pathway is amine and polyamine metabolism; carnitine metabolism. Its function is as follows. Overproduction of CaiE stimulates the activity of CaiB and CaiD. The polypeptide is Carnitine operon protein CaiE (Salmonella dublin (strain CT_02021853)).